We begin with the raw amino-acid sequence, 304 residues long: Dermonecrotic toxin LlSicTox-betaIA1 (304 aa).

The first 21 residues, 1–21 (MLLSAVISFIGFAAFLQEANG), serve as a signal peptide directing secretion. Residues 22-26 (HVVER) constitute a propeptide that is removed on maturation. Histidine 38 is a catalytic residue. Mg(2+) is bound by residues glutamate 58 and aspartate 60. Histidine 74 acts as the Nucleophile in catalysis. Disulfide bonds link cysteine 78/cysteine 84 and cysteine 80/cysteine 223. Aspartate 118 is a Mg(2+) binding site.

This sequence belongs to the arthropod phospholipase D family. Class II subfamily. Class IIb sub-subfamily. It depends on Mg(2+) as a cofactor. In terms of tissue distribution, expressed by the venom gland.

Its subcellular location is the secreted. The catalysed reaction is an N-(acyl)-sphingosylphosphocholine = an N-(acyl)-sphingosyl-1,3-cyclic phosphate + choline. It catalyses the reaction an N-(acyl)-sphingosylphosphoethanolamine = an N-(acyl)-sphingosyl-1,3-cyclic phosphate + ethanolamine. The enzyme catalyses a 1-acyl-sn-glycero-3-phosphocholine = a 1-acyl-sn-glycero-2,3-cyclic phosphate + choline. It carries out the reaction a 1-acyl-sn-glycero-3-phosphoethanolamine = a 1-acyl-sn-glycero-2,3-cyclic phosphate + ethanolamine. Its function is as follows. Dermonecrotic toxins cleave the phosphodiester linkage between the phosphate and headgroup of certain phospholipids (sphingolipid and lysolipid substrates), forming an alcohol (often choline) and a cyclic phosphate. This toxin acts on sphingomyelin (SM) with low activity. It may also act on ceramide phosphoethanolamine (CPE), lysophosphatidylcholine (LPC) and lysophosphatidylethanolamine (LPE), but not on lysophosphatidylserine (LPS), and lysophosphatidylglycerol (LPG). It acts by transphosphatidylation, releasing exclusively cyclic phosphate products as second products. Induces hemolysis, dermonecrosis, and edema. Also induces platelet aggregation. This Loxosceles laeta (South American recluse spider) protein is Dermonecrotic toxin LlSicTox-betaIA1.